A 1091-amino-acid polypeptide reads, in one-letter code: Neural cell adhesion molecule 1 (1091 aa).

A signal peptide spans 1–19 (MLPAAALPWTLFFLGAAAS). Ig-like C2-type domains lie at 20-113 (LQVD…VNVK), 116-205 (QKLM…KDIQ), 212-301 (PSVR…ATIH), 308-403 (PKIT…LEVQ), and 406-495 (PKLQ…FILV). Residues 20–711 (LQVDIVPSQG…STSPTSGLGT (692 aa)) lie on the Extracellular side of the membrane. 2 cysteine pairs are disulfide-bonded: Cys-41–Cys-96 and Cys-139–Cys-189. Heparin-binding positions include 152–156 (KHKGR) and 161–165 (KKDVR). Asn-222 carries N-linked (GlcNAc...) asparagine glycosylation. Cysteines 235 and 287 form a disulfide. 5 N-linked (GlcNAc...) asparagine glycosylation sites follow: Asn-315, Asn-347, Asn-423, Asn-449, and Asn-478. The cysteines at positions 329 and 385 are disulfide-linked. The cysteines at positions 426 and 479 are disulfide-linked. 2 Fibronectin type-III domains span residues 499 to 598 (TPSS…TQPV) and 600 to 696 (EPSA…SAQP). Residues 712 to 729 (AAIVGILIVIFVLLLVAV) traverse the membrane as a helical segment. Topologically, residues 730–1091 (DVTCYFLNKC…ATEIRHLQQK (362 aa)) are cytoplasmic. 4 disordered regions span residues 756–809 (GAKG…TEPE), 840–916 (ATAQ…NNLS), 937–1023 (ETSK…GTFK), and 1041–1091 (TPAS…LQQK). The segment covering 758–799 (KGKDMEEGKAAFSKDESKEPIVEVRTEEERTPNHDGGKHTEP) has biased composition (basic and acidic residues). Residues 845–856 (SPTSETTTLTSS) are compositionally biased toward low complexity. Polar residues-rich tracts occupy residues 904–916 (DTPS…NNLS) and 980–1012 (QPST…PSQN). Basic and acidic residues-rich tracts occupy residues 1013-1023 (EDFKMDEGTFK) and 1068-1091 (KTEK…LQQK).

Post-translationally, polysialylated by ST8SIA2 and ST8SIA4. Polysialylation modulates cell interactions by confering both attractive and repulsive properties that are highly regulated by ST8SIA2 and ST8SIA4. Polysialylation is formed on a-2,3-linked sialic acid of core glycans.

Its subcellular location is the cell membrane. Its function is as follows. This protein is a cell adhesion molecule involved in neuron-neuron adhesion, neurite fasciculation, outgrowth of neurites, etc. The polypeptide is Neural cell adhesion molecule 1 (Gallus gallus (Chicken)).